The following is a 587-amino-acid chain: Probable terpene synthase 12 (587 aa).

Mg(2+) contacts are provided by D338, D342, and E489. Residues 338 to 342 (DDVYD) carry the DDXXD motif motif.

The protein belongs to the terpene synthase family. The cofactor is Mg(2+).

In terms of biological role, probable sesquiterpene synthase. The chain is Probable terpene synthase 12 (TPS12) from Ricinus communis (Castor bean).